We begin with the raw amino-acid sequence, 545 residues long: Glucose-6-phosphate isomerase (545 aa).

Catalysis depends on E351, which acts as the Proton donor. Catalysis depends on residues H382 and K510.

The protein belongs to the GPI family.

It is found in the cytoplasm. The enzyme catalyses alpha-D-glucose 6-phosphate = beta-D-fructose 6-phosphate. The protein operates within carbohydrate biosynthesis; gluconeogenesis. It functions in the pathway carbohydrate degradation; glycolysis; D-glyceraldehyde 3-phosphate and glycerone phosphate from D-glucose: step 2/4. In terms of biological role, catalyzes the reversible isomerization of glucose-6-phosphate to fructose-6-phosphate. The chain is Glucose-6-phosphate isomerase from Shewanella amazonensis (strain ATCC BAA-1098 / SB2B).